The following is a 276-amino-acid chain: MADNKLHIFAVSDSVGETAEKIAVASVLQFNLDRNITRFSRVTKEEQVEKIIDQAVENDAIIIYTIVKPELSRFLDETARIKQVIAVNVMAPLFDAIQFKTGQKPEYITGLTHKMDDQYFNRMKAIEYTIEHDNGQNLDSVHEADLIVLGLPRTSKTPLSMHLANLGIKVANYPILMDTEIPQEIVDLKGRIPMVGLTIDIDTLMELRKERFRSFELPDDIETLDDLVAEELDNAYRIYAKLKCLVIDVTLDDIEEVGNTITHKFNLPLRITHHRF.

Residue Gly-150–Thr-157 coordinates ADP.

The protein belongs to the pyruvate, phosphate/water dikinase regulatory protein family. PDRP subfamily.

It carries out the reaction N(tele)-phospho-L-histidyl/L-threonyl-[pyruvate, phosphate dikinase] + ADP = N(tele)-phospho-L-histidyl/O-phospho-L-threonyl-[pyruvate, phosphate dikinase] + AMP + H(+). The catalysed reaction is N(tele)-phospho-L-histidyl/O-phospho-L-threonyl-[pyruvate, phosphate dikinase] + phosphate + H(+) = N(tele)-phospho-L-histidyl/L-threonyl-[pyruvate, phosphate dikinase] + diphosphate. Functionally, bifunctional serine/threonine kinase and phosphorylase involved in the regulation of the pyruvate, phosphate dikinase (PPDK) by catalyzing its phosphorylation/dephosphorylation. This Syntrophomonas wolfei subsp. wolfei (strain DSM 2245B / Goettingen) protein is Putative pyruvate, phosphate dikinase regulatory protein 1.